A 44-amino-acid polypeptide reads, in one-letter code: Thymosin beta-10 (44 aa).

Basic and acidic residues-rich tracts occupy residues methionine 1–glutamate 25 and glutamate 33–serine 44. The segment at methionine 1–serine 44 is disordered. N-acetylalanine is present on alanine 2. At lysine 4 the chain carries N6-acetyllysine. Serine 12 is subject to Phosphoserine. Residue lysine 15 is modified to N6-acetyllysine. Residues threonine 21, threonine 23, and threonine 34 each carry the phosphothreonine modification. The residue at position 39 (lysine 39) is an N6-acetyllysine. At serine 41 the chain carries Phosphoserine.

The protein belongs to the thymosin beta family.

It is found in the cytoplasm. The protein resides in the cytoskeleton. Its function is as follows. Plays an important role in the organization of the cytoskeleton. Binds to and sequesters actin monomers (G actin) and therefore inhibits actin polymerization. The chain is Thymosin beta-10 (Tmsb10) from Rattus norvegicus (Rat).